Reading from the N-terminus, the 335-residue chain is tRNA N6-adenosine threonylcarbamoyltransferase (335 aa).

Residues His110 and His114 each contribute to the Fe cation site. Substrate contacts are provided by residues 132-136, Asp165, Gly178, and Asn271; that span reads LVSGG. Fe cation is bound at residue Asp299.

It belongs to the KAE1 / TsaD family. It depends on Fe(2+) as a cofactor.

It is found in the cytoplasm. The catalysed reaction is L-threonylcarbamoyladenylate + adenosine(37) in tRNA = N(6)-L-threonylcarbamoyladenosine(37) in tRNA + AMP + H(+). In terms of biological role, required for the formation of a threonylcarbamoyl group on adenosine at position 37 (t(6)A37) in tRNAs that read codons beginning with adenine. Is involved in the transfer of the threonylcarbamoyl moiety of threonylcarbamoyl-AMP (TC-AMP) to the N6 group of A37, together with TsaE and TsaB. TsaD likely plays a direct catalytic role in this reaction. This is tRNA N6-adenosine threonylcarbamoyltransferase from Campylobacter jejuni subsp. jejuni serotype O:23/36 (strain 81-176).